A 342-amino-acid chain; its full sequence is Peptide chain release factor 1 (342 aa).

The residue at position 211 (glutamine 211) is an N5-methylglutamine. The disordered stretch occupies residues 262–282 (KEREISQKRKSQIGTGERSEK).

This sequence belongs to the prokaryotic/mitochondrial release factor family. Post-translationally, methylated by PrmC. Methylation increases the termination efficiency of RF1.

It localises to the cytoplasm. In terms of biological role, peptide chain release factor 1 directs the termination of translation in response to the peptide chain termination codons UAG and UAA. In Thermotoga maritima (strain ATCC 43589 / DSM 3109 / JCM 10099 / NBRC 100826 / MSB8), this protein is Peptide chain release factor 1 (prfA).